The chain runs to 765 residues: Probable beta-glucosidase M (765 aa).

The N-terminal stretch at 1–19 (MHSISALLSLLGGLALSSA) is a signal peptide. 5 N-linked (GlcNAc...) asparagine glycosylation sites follow: N24, N71, N93, N126, and N258. D286 is a catalytic residue. N-linked (GlcNAc...) asparagine glycosylation is found at N314, N321, N432, N519, N541, and N647.

Belongs to the glycosyl hydrolase 3 family.

Its subcellular location is the secreted. It carries out the reaction Hydrolysis of terminal, non-reducing beta-D-glucosyl residues with release of beta-D-glucose.. Its pathway is glycan metabolism; cellulose degradation. Beta-glucosidases are one of a number of cellulolytic enzymes involved in the degradation of cellulosic biomass. Catalyzes the last step releasing glucose from the inhibitory cellobiose. The polypeptide is Probable beta-glucosidase M (bglM) (Aspergillus niger (strain ATCC MYA-4892 / CBS 513.88 / FGSC A1513)).